The sequence spans 592 residues: Cryptochrome-2 (592 aa).

Residues 21 to 150 form the Photolyase/cryptochrome alpha/beta domain; it reads ASSVHWFRKG…EVVTENSHTL (130 aa). Residue K29 forms a Glycyl lysine isopeptide (Lys-Gly) (interchain with G-Cter in ubiquitin) linkage. At S89 the chain carries Phosphoserine. Residues K125 and K241 each participate in a glycyl lysine isopeptide (Lys-Gly) (interchain with G-Cter in ubiquitin) cross-link. S265 is subject to Phosphoserine; by MAPK. S270 lines the FAD pocket. The residue at position 298 (S298) is a Phosphoserine. Q307 serves as a coordination point for FAD. A Glycyl lysine isopeptide (Lys-Gly) (interchain with G-Cter in ubiquitin) cross-link involves residue K347. FAD contacts are provided by residues H373 and 405–407; that span reads DAD. The segment at 389-488 is required for inhibition of CLOCK-BMAL1-mediated transcription; it reads WVSWESGVRV…IIGVDYPRPI (100 aa). Glycyl lysine isopeptide (Lys-Gly) (interchain with G-Cter in ubiquitin) cross-links involve residues K474 and K503. Positions 532–592 are disordered; sequence VAEPGSSQAG…PTQEPASKDS (61 aa). Residues 536–547 show a composition bias toward polar residues; it reads GSSQAGSISNTG. Phosphoserine; by GSK3-beta is present on S553. S557 bears the Phosphoserine; by DYRK1A and MAPK mark. The span at 582–592 shows a compositional bias: polar residues; that stretch reads MPTQEPASKDS.

Belongs to the DNA photolyase class-1 family. In terms of assembly, component of the circadian core oscillator, which includes the CRY proteins, CLOCK or NPAS2, BMAL1 or BMAL2, CSNK1D and/or CSNK1E, TIMELESS, and the PER proteins. Interacts with TIMELESS. Interacts directly with PER1, PER2 and PER3; interaction with PER2 inhibits its ubiquitination and vice versa. Interacts with CLOCK-BMAL1. Interacts with BMAL1. Interacts with CLOCK. Interacts with NFIL3. Interacts with FBXL3 and FBXL21. FBXL3, PER2 and the cofactor FAD compete for overlapping binding sites. FBXL3 cannot bind CRY2 that interacts already with PER2 or that contains bound FAD. Interacts with PPP5C (via TPR repeats); the interaction down-regulates the PPP5C phosphatase activity on CSNK1E. Interacts with nuclear receptors AR and NR3C1/GR; the interaction is ligand dependent. Interacts with PRKDC. Interacts with CIART. Interacts with DDB1, USP7 and TARDBP. Interacts with HNF4A. Interacts with PPARA. Interacts with PPARG in a ligand-dependent manner. Interacts with PPARD (via domain NR LBD) in a ligand-dependent manner. Interacts with NR1I2 (via domain NR LBD) in a ligand-dependent manner. Interacts with NR1I3 and VDR in a ligand-dependent manner. FAD serves as cofactor. It depends on (6R)-5,10-methylene-5,6,7,8-tetrahydrofolate as a cofactor. In terms of processing, phosphorylation on Ser-265 by MAPK is important for the inhibition of CLOCK-BMAL1-mediated transcriptional activity. Phosphorylation by CSKNE requires interaction with PER1 or PER2. Phosphorylated in a circadian manner at Ser-553 and Ser-557 in the suprachiasmatic nucleus (SCN) and liver. Phosphorylation at Ser-557 by DYRK1A promotes subsequent phosphorylation at Ser-553 by GSK3-beta: the two-step phosphorylation at the neighboring Ser residues leads to its proteasomal degradation. Ubiquitinated by the SCF(FBXL3) and SCF(FBXL21) complexes, regulating the balance between degradation and stabilization. The SCF(FBXL3) complex is mainly nuclear and mediates ubiquitination and subsequent degradation of CRY2. In contrast, cytoplasmic SCF(FBXL21) complex-mediated ubiquitination leads to stabilize CRY2 and counteract the activity of the SCF(FBXL3) complex. The SCF(FBXL3) and SCF(FBXL21) complexes probably mediate ubiquitination at different Lys residues. The SCF(FBXL3) complex recognizes and binds CRY2 phosphorylated at Ser-553 and Ser-557. Ubiquitination may be inhibited by PER2. Deubiquitinated by USP7. In terms of tissue distribution, expression in the retina is restricted to the photoreceptor layer (at protein level). Expressed in all tissues examined including heart, brain, spleen, lung, liver, skeletal muscle, kidney and testis. Weak expression in spleen.

Its subcellular location is the cytoplasm. The protein localises to the nucleus. KL001 (N-[3-(9H-carbazol-9-yl)-2-hydroxypropyl]-N-(2-furanylmethyl)-methanesulfonamide) binds to CRY1 and stabilizes it by inhibiting FBXL3- and ubiquitin-dependent degradation of CRY1 resulting in lengthening of the circadian periods. KL001-mediated CRY1 stabilization can inhibit glucagon-induced gluconeogenesis in primary hepatocytes. Transcriptional repressor which forms a core component of the circadian clock. The circadian clock, an internal time-keeping system, regulates various physiological processes through the generation of approximately 24 hour circadian rhythms in gene expression, which are translated into rhythms in metabolism and behavior. It is derived from the Latin roots 'circa' (about) and 'diem' (day) and acts as an important regulator of a wide array of physiological functions including metabolism, sleep, body temperature, blood pressure, endocrine, immune, cardiovascular, and renal function. Consists of two major components: the central clock, residing in the suprachiasmatic nucleus (SCN) of the brain, and the peripheral clocks that are present in nearly every tissue and organ system. Both the central and peripheral clocks can be reset by environmental cues, also known as Zeitgebers (German for 'timegivers'). The predominant Zeitgeber for the central clock is light, which is sensed by retina and signals directly to the SCN. The central clock entrains the peripheral clocks through neuronal and hormonal signals, body temperature and feeding-related cues, aligning all clocks with the external light/dark cycle. Circadian rhythms allow an organism to achieve temporal homeostasis with its environment at the molecular level by regulating gene expression to create a peak of protein expression once every 24 hours to control when a particular physiological process is most active with respect to the solar day. Transcription and translation of core clock components (CLOCK, NPAS2, BMAL1, BMAL2, PER1, PER2, PER3, CRY1 and CRY2) plays a critical role in rhythm generation, whereas delays imposed by post-translational modifications (PTMs) are important for determining the period (tau) of the rhythms (tau refers to the period of a rhythm and is the length, in time, of one complete cycle). A diurnal rhythm is synchronized with the day/night cycle, while the ultradian and infradian rhythms have a period shorter and longer than 24 hours, respectively. Disruptions in the circadian rhythms contribute to the pathology of cardiovascular diseases, cancer, metabolic syndromes and aging. A transcription/translation feedback loop (TTFL) forms the core of the molecular circadian clock mechanism. Transcription factors, CLOCK or NPAS2 and BMAL1 or BMAL2, form the positive limb of the feedback loop, act in the form of a heterodimer and activate the transcription of core clock genes and clock-controlled genes (involved in key metabolic processes), harboring E-box elements (5'-CACGTG-3') within their promoters. The core clock genes: PER1/2/3 and CRY1/2 which are transcriptional repressors form the negative limb of the feedback loop and interact with the CLOCK|NPAS2-BMAL1|BMAL2 heterodimer inhibiting its activity and thereby negatively regulating their own expression. This heterodimer also activates nuclear receptors NR1D1/2 and RORA/B/G, which form a second feedback loop and which activate and repress BMAL1 transcription, respectively. CRY1 and CRY2 have redundant functions but also differential and selective contributions at least in defining the pace of the SCN circadian clock and its circadian transcriptional outputs. Less potent transcriptional repressor in cerebellum and liver than CRY1, though less effective in lengthening the period of the SCN oscillator. Seems to play a critical role in tuning SCN circadian period by opposing the action of CRY1. With CRY1, dispensable for circadian rhythm generation but necessary for the development of intercellular networks for rhythm synchrony. May mediate circadian regulation of cAMP signaling and gluconeogenesis by blocking glucagon-mediated increases in intracellular cAMP concentrations and in CREB1 phosphorylation. Besides its role in the maintenance of the circadian clock, is also involved in the regulation of other processes. Plays a key role in glucose and lipid metabolism modulation, in part, through the transcriptional regulation of genes involved in these pathways, such as LEP or ACSL4. Represses glucocorticoid receptor NR3C1/GR-induced transcriptional activity by binding to glucocorticoid response elements (GREs). Represses the CLOCK-BMAL1 induced transcription of BHLHE40/DEC1 and NAMPT. Represses PPARD and its target genes in the skeletal muscle and limits exercise capacity. Represses the transcriptional activity of NR1I2. This is Cryptochrome-2 (Cry2) from Mus musculus (Mouse).